The following is a 254-amino-acid chain: tRNA uridine(34) hydroxylase (254 aa).

A Rhodanese domain is found at 123–217 (QDPNVILLDT…YLESIPESES (95 aa)). The active-site Cysteine persulfide intermediate is Cys-177.

It belongs to the TrhO family.

It carries out the reaction uridine(34) in tRNA + AH2 + O2 = 5-hydroxyuridine(34) in tRNA + A + H2O. Its function is as follows. Catalyzes oxygen-dependent 5-hydroxyuridine (ho5U) modification at position 34 in tRNAs. This is tRNA uridine(34) hydroxylase from Legionella pneumophila (strain Corby).